The primary structure comprises 382 residues: D-galactonate dehydratase (382 aa).

Asp183 lines the Mg(2+) pocket. Catalysis depends on His185, which acts as the Proton donor. The Mg(2+) site is built by Glu209 and Glu235. The Proton acceptor role is filled by His285.

Belongs to the mandelate racemase/muconate lactonizing enzyme family. GalD subfamily. Mg(2+) is required as a cofactor.

It catalyses the reaction D-galactonate = 2-dehydro-3-deoxy-D-galactonate + H2O. It functions in the pathway carbohydrate acid metabolism; D-galactonate degradation; D-glyceraldehyde 3-phosphate and pyruvate from D-galactonate: step 1/3. In terms of biological role, catalyzes the dehydration of D-galactonate to 2-keto-3-deoxy-D-galactonate. The chain is D-galactonate dehydratase from Klebsiella pneumoniae subsp. pneumoniae (strain ATCC 700721 / MGH 78578).